A 345-amino-acid polypeptide reads, in one-letter code: SLAM family member 5 (345 aa).

The signal sequence occupies residues 1–21; that stretch reads MAQHHLWILLLCLQTWPEAAG. Over 22–225 the chain is Extracellular; that stretch reads KDSEIFTVNG…AMGFRTHHTG (204 aa). Residues 26 to 129 enclose the Ig-like V-type domain; it reads IFTVNGILGE…TTKRYNLQIY (104 aa). The region spanning 135–207 is the Ig-like C2-type domain; that stretch reads PKITQSLMAS…PVSNNSDSIS (73 aa). N-linked (GlcNAc...) asparagine glycosylation is present at Asn150. An intrachain disulfide couples Cys155 to Cys193. Residues 226–246 form a helical membrane-spanning segment; the sequence is LLSVLAMFFLLVLILSSVFLF. Residues 247–345 lie on the Cytoplasmic side of the membrane; the sequence is RLFKRRQGRI…PGTSSYEIVI (99 aa). The ITSM 1 motif lies at 277 to 282; the sequence is TIYTYI. Residue Tyr279 is modified to Phosphotyrosine. Tyr296 bears the Phosphotyrosine; by LYN mark. The ITSM 2 signature appears at 314–319; it reads TVYSEV. Tyr316 carries the post-translational modification Phosphotyrosine. The segment at 326 to 345 is disordered; sequence GKASTQDSKPPGTSSYEIVI. Over residues 328–345 the composition is skewed to polar residues; that stretch reads ASTQDSKPPGTSSYEIVI. A Phosphotyrosine; by FES modification is found at Tyr341.

In terms of assembly, homodimer; via its extracellular domain. Forms a head to tail dimer with a CD48 molecule from another cell. Interacts with SH2 domain-containing proteins SH2D1A/SAP and SH2D1B/EAT-2. Interacts with tyrosine-protein phosphatases PTPN6/SHP-1 and PTPN11//SHP-2 via its phosphorylated cytoplasmic domain, and this interaction is blocked by SH2D1A. Interacts (via phosphorylated ITSM 1 and 2) with INPP5D/SHIP1. Post-translationally, phosphorylated by tyrosine-protein kinase LCK on tyrosine residues following ligation induced by agonist monoclonal antibody. The association with SH2D1A is dependent of tyrosine phosphorylation of its cytoplasmic domain. Phosphorylated on Tyr-296 and Tyr-316 following platelet aggregation. Phosphorylated on tyrosine residues upon high affinity immunoglobulin epsilon receptor aggregation in mast cells. N-glycosylated. Predominantly expressed in hematopoietic tissues, such as lymph node, spleen and peripheral leukocytes. Expressed in macrophages, B-cells, monocytes, platelets, thymocytes, T-cells and dendritic cells. Highly expressed in memory T-cells. Expressed in mast cells.

The protein resides in the cell membrane. Self-ligand receptor of the signaling lymphocytic activation molecule (SLAM) family. SLAM receptors triggered by homo- or heterotypic cell-cell interactions are modulating the activation and differentiation of a wide variety of immune cells and thus are involved in the regulation and interconnection of both innate and adaptive immune response. Activities are controlled by presence or absence of small cytoplasmic adapter proteins, SH2D1A/SAP and/or SH2D1B/EAT-2. Can mediate natural killer (NK) cell cytotoxicity dependent on SH2D1A and SH2D1B. Increases proliferative responses of activated T-cells and SH2D1A/SAP does not seem be required for this process. Homophilic interactions enhance interferon gamma/IFNG secretion in lymphocytes and induce platelet stimulation via a SH2D1A-dependent pathway. May serve as a marker for hematopoietic progenitor cells Required for a prolonged T-cell:B-cell contact, optimal T follicular helper function, and germinal center formation. In germinal centers involved in maintaining B-cell tolerance and in preventing autoimmunity. In mast cells negatively regulates high affinity immunoglobulin epsilon receptor signaling; independent of SH2D1A and SH2D1B but implicating FES and PTPN6/SHP-1. In macrophages enhances LPS-induced MAPK phosphorylation and NF-kappaB activation and modulates LPS-induced cytokine secretion; involving ITSM 2. Positively regulates macroautophagy in primary dendritic cells via stabilization of IRF8; inhibits TRIM21-mediated proteasomal degradation of IRF8. The sequence is that of SLAM family member 5 (CD84) from Homo sapiens (Human).